The sequence spans 322 residues: Probable L-asparaginase (322 aa).

Positions 6–320 (PRLALIHTGG…EDIRRVFTQG (315 aa)) constitute an Asparaginase/glutaminase domain. Residues 13–37 (TGGTIASRPSPDGRGLTPQTPPALP) form a disordered region. T16 serves as the catalytic O-isoaspartyl threonine intermediate. Residues S54 and 85–86 (TD) each bind substrate.

Belongs to the asparaginase 1 family.

Its subcellular location is the cytoplasm. The catalysed reaction is L-asparagine + H2O = L-aspartate + NH4(+). This is Probable L-asparaginase (ansA) from Deinococcus radiodurans (strain ATCC 13939 / DSM 20539 / JCM 16871 / CCUG 27074 / LMG 4051 / NBRC 15346 / NCIMB 9279 / VKM B-1422 / R1).